We begin with the raw amino-acid sequence, 155 residues long: Protein phosphatase 1 regulatory subunit 17 (155 aa).

The disordered stretch occupies residues 41–73 (KKKPRKGKNVQATLNVESDQKKPRRKDTPALHI). The segment covering 58-69 (SDQKKPRRKDTP) has biased composition (basic and acidic residues). Threonine 68 and threonine 119 each carry phosphothreonine; by PKG/PRKG1.

In terms of processing, substrate for cGMP-dependent protein kinase. Phosphorylated by PRKG1 isoform alpha. Phosphorylation of Thr-68 and Thr-119 is required for its phosphatase activity. Substrate for cGMP-dependent protein kinase. Highly expressed in cerebellum.

Its function is as follows. Inhibits phosphatase activities of protein phosphatase 1 (PP1) and protein phosphatase 2A (PP2A) complexes. The polypeptide is Protein phosphatase 1 regulatory subunit 17 (PPP1R17) (Homo sapiens (Human)).